We begin with the raw amino-acid sequence, 89 residues long: UPF0335 protein Nwi_0989 (89 aa).

The protein belongs to the UPF0335 family.

This is UPF0335 protein Nwi_0989 from Nitrobacter winogradskyi (strain ATCC 25391 / DSM 10237 / CIP 104748 / NCIMB 11846 / Nb-255).